The primary structure comprises 210 residues: MKTTAQTAPARSALQDASDTQLAIELIGLGARPQVVEAEVTLSRSRVYRLYRELTGGSPPKGMLPFSADWFVTWRPNAHASYLLSVHEYMQQRAGLPGIRAVLNSYRVYAEHMKANNEECLISFTRFWTLVRFCEGGLLQLSTCPCCGGRFVTHAHEPLASFICTLCQPPSRVRRSVRRETPHATANAPAAVLGNRPPVAMPGFGMVPAL.

Zn(2+) contacts are provided by Cys-144, Cys-147, Cys-164, and Cys-167.

The protein belongs to the FlhC family. In terms of assembly, heterohexamer composed of two FlhC and four FlhD subunits. Each FlhC binds a FlhD dimer, forming a heterotrimer, and a hexamer assembles by dimerization of two heterotrimers. Zn(2+) is required as a cofactor.

It is found in the cytoplasm. In terms of biological role, functions in complex with FlhD as a master transcriptional regulator that regulates transcription of several flagellar and non-flagellar operons by binding to their promoter region. Activates expression of class 2 flagellar genes, including fliA, which is a flagellum-specific sigma factor that turns on the class 3 genes. Also regulates genes whose products function in a variety of physiological pathways. In Cupriavidus pinatubonensis (strain JMP 134 / LMG 1197) (Cupriavidus necator (strain JMP 134)), this protein is Flagellar transcriptional regulator FlhC.